The sequence spans 2269 residues: Anaphase-promoting complex subunit 1 (2269 aa).

Disordered regions lie at residues 305–334 (PSSN…QTIN), 379–433 (SSPP…QENS), 609–644 (NNNN…RKPL), 804–845 (KVYP…NNNN), and 1136–1197 (STAS…NSTS). Composition is skewed to low complexity over residues 306 to 334 (SSNA…QTIN), 379 to 430 (SSPP…QQQQ), 609 to 638 (NNNN…NNNN), 809 to 845 (NNNN…NNNN), and 1136 to 1159 (STAS…GQSN). Polar residues predominate over residues 1160–1177 (GLPMNSTTNQMNSHQINN). PC repeat units follow at residues 1440–1472 (AALM…PIND) and 1483–1520 (TAGM…ISKE). Residues 1535–1586 (STPSISSNRNNNDLFNNGSNNNSSSNGGGGGGGGNNNGNNSNNGNNGSSQFK) form a disordered region. Positions 1540-1559 (SSNRNNNDLFNNGSNNNSSS) are enriched in low complexity. Residues 1560–1570 (NGGGGGGGGNN) are compositionally biased toward gly residues. The span at 1571-1583 (NGNNSNNGNNGSS) shows a compositional bias: low complexity. 3 PC repeats span residues 1605–1637 (GAII…GLNY), 1722–1756 (GAAF…RQVY), and 1792–1807 (LVMA…KILR). Positions 1960–1993 (NNNNNNNNNNNNNNNNNNNNNNNNNNNNNNNNNN) are enriched in low complexity. A disordered region spans residues 1960–1997 (NNNNNNNNNNNNNNNNNNNNNNNNNNNNNNNNNNKNIL).

The protein belongs to the APC1 family. As to quaternary structure, the APC/C is composed of at least 13 subunits that stay tightly associated throughout the cell cycle: anapc1, anapc2, anapc3, anapc4, anapc5, anapc6, anapc7, anapc8, anapc10, anapc11, cdc20, cdc26 and cdh1.

It is found in the nucleus. The protein operates within protein modification; protein ubiquitination. In terms of biological role, component of the anaphase promoting complex/cyclosome (APC/C), a cell cycle-regulated E3 ubiquitin-protein ligase complex that controls progression through mitosis and the G1 phase of the cell cycle. The polypeptide is Anaphase-promoting complex subunit 1 (anapc1) (Dictyostelium discoideum (Social amoeba)).